The chain runs to 528 residues: Phosphoenolpyruvate carboxykinase (ATP) (528 aa).

Substrate is bound by residues Arg-56, Tyr-192, and Lys-198. Residues Lys-198, His-217, and 233 to 241 (GLSGTGKTT) each bind ATP. Residues Lys-198 and His-217 each coordinate Mn(2+). Asp-254 provides a ligand contact to Mn(2+). Positions 282, 319, and 444 each coordinate ATP. Substrate is bound at residue Arg-319.

Belongs to the phosphoenolpyruvate carboxykinase (ATP) family. The cofactor is Mn(2+).

It is found in the cytoplasm. The catalysed reaction is oxaloacetate + ATP = phosphoenolpyruvate + ADP + CO2. It participates in carbohydrate biosynthesis; gluconeogenesis. Functionally, involved in the gluconeogenesis. Catalyzes the conversion of oxaloacetate (OAA) to phosphoenolpyruvate (PEP) through direct phosphoryl transfer between the nucleoside triphosphate and OAA. This chain is Phosphoenolpyruvate carboxykinase (ATP), found in Bacillus cereus (strain B4264).